The primary structure comprises 427 residues: Trigger factor (427 aa).

The PPIase FKBP-type domain occupies G163 to P248.

Belongs to the FKBP-type PPIase family. Tig subfamily.

It is found in the cytoplasm. It carries out the reaction [protein]-peptidylproline (omega=180) = [protein]-peptidylproline (omega=0). In terms of biological role, involved in protein export. Acts as a chaperone by maintaining the newly synthesized protein in an open conformation. Functions as a peptidyl-prolyl cis-trans isomerase. The polypeptide is Trigger factor (Streptococcus pneumoniae (strain ATCC 700669 / Spain 23F-1)).